The following is a 1721-amino-acid chain: Intersectin-1 (1721 aa).

In terms of domain architecture, EH 1 spans Glu21–Ile109. The EF-hand 1 domain occupies Leu53–Lys88. Positions 66, 68, 70, 72, and 77 each coordinate Ca(2+). At Ser203 the chain carries Phosphoserine. In terms of domain architecture, EH 2 spans Ser221–Arg310. An EF-hand 2 domain is found at Leu254–Ala289. Positions 267, 269, 271, 273, and 278 each coordinate Ca(2+). Position 318 is a phosphoserine (Ser318). 2 disordered regions span residues Ser322 to Val348 and Gln650 to Ala701. The KLERQ stretch occupies residues Asp326–Gln702. The stretch at Arg355–Gln659 forms a coiled coil. A Phosphoserine modification is found at Ser687. An SH3 1 domain is found at Val740 to Glu806. The tract at residues Leu836–Asp868 is disordered. Residues Val838–Asn862 show a composition bias toward polar residues. Thr897 is modified (phosphothreonine). Residues Ser901, Ser902, and Ser904 each carry the phosphoserine modification. Residues Val913–Gly971 enclose the SH3 2 domain. Residues Ser978, Ser986, and Ser995 each carry the phosphoserine modification. 2 consecutive SH3 domains span residues Val1002–Ser1060 and Lys1074–Pro1138. A required for interaction with FCHSD2 region spans residues Lys1074 to Pro1138. A Bipartite nuclear localization signal; in isoform 2 motif is present at residues Arg1104 to Trp1127. The residue at position 1137 (Ser1137) is a Phosphoserine. Thr1144 carries the post-translational modification Phosphothreonine. One can recognise an SH3 5 domain in the interval Ala1155–Asp1214. A DH domain is found at Lys1237–Gly1423. One can recognise a PH domain in the interval Lys1462–Glu1571. In terms of domain architecture, C2 spans Lys1579–Val1695. Ser1645 carries the post-translational modification Phosphoserine. Positions 1667, 1670, and 1673 each coordinate Ca(2+).

As to quaternary structure, interacts (via DH domain) with CDC42. Interacts (via SH3 domain 1) with WASL. Interacts with dynamin, SNAP25 and SNAP23. Interacts with clathrin-associated proteins and other components of the endocytic machinery, such as SPIN90, EPS15, EPN1, EPN2, STON2, FCHO1, FCHO2 and DAB2. Interacts (via SH3 domains) with REPS1 and SGIP1. Interacts with ARHGAP31. Interacts with ADAM15. Interacts with PRRT2. Interacts (via SH3 domain 4) with FCHSD2 (via SH3 domain 2). Interacts (via SH3 domain 1) with DENND2B. Interacts (via SH3 domains) with CBL. Isoform 2: Interacts with CBL and DNM1. Isoform 2: Interacts with LMNA. Isoform 2: Interacts with importin subunit KPNA1; this is likely to mediate its import into the nucleus. Interacts with DNM2. (Microbial infection) Interacts with vaccinia virus protein A36. Ca(2+) serves as cofactor. As to expression, isoform 1 is expressed almost exclusively in the brain. Isoform 2 is detected in brain, spleen, lung, liver, heart, skeletal muscle and kidney. Isoform 5 is primarily expressed in brain, spleen, lung and kidney (at protein level). Isoform 1 and isoform 2 are detected in brain. Isoform 2 is ubiquitous in adult and fetal tissues with high expression in skeletal muscle, heart, spleen, ovary, testis and all fetal tissues tested and low expression in thymus, blood, lung, liver and pancreas. Isoform 1 is expressed almost exclusively in the brain, in all brain regions. Not expressed in the spinal cord.

The protein resides in the endomembrane system. The protein localises to the synapse. Its subcellular location is the synaptosome. It is found in the cell projection. It localises to the lamellipodium. The protein resides in the cell membrane. The protein localises to the membrane. Its subcellular location is the clathrin-coated pit. It is found in the recycling endosome. It localises to the endosome. The protein resides in the cytoplasmic vesicle. The protein localises to the cytoplasm. Its subcellular location is the nucleus envelope. Functionally, adapter protein that provides a link between the endocytic membrane traffic and the actin assembly machinery. Acts as a guanine nucleotide exchange factor (GEF) for CDC42, and thereby stimulates actin nucleation mediated by WASL and the ARP2/3 complex. Plays a role in the assembly and maturation of clathrin-coated vesicles. Recruits FCHSD2 to clathrin-coated pits. Involved in endocytosis of activated EGFR, and probably also other growth factor receptors. Involved in endocytosis of integrin beta-1 (ITGB1) and transferrin receptor (TFR); internalization of ITGB1 as DAB2-dependent cargo but not TFR may involve association with DAB2. Promotes ubiquitination and subsequent degradation of EGFR, and thereby contributes to the down-regulation of EGFR-dependent signaling pathways. In chromaffin cells, required for normal exocytosis of catecholamines. Required for rapid replenishment of release-ready synaptic vesicles at presynaptic active zones. Inhibits ARHGAP31 activity toward RAC1. Its function is as follows. Plays a role in synaptic vesicle endocytosis in brain neurons. The polypeptide is Intersectin-1 (Homo sapiens (Human)).